The sequence spans 705 residues: Zinc finger protein 770 (705 aa).

Lys-16 is covalently cross-linked (Glycyl lysine isopeptide (Lys-Gly) (interchain with G-Cter in SUMO2)). 3 consecutive C2H2-type zinc fingers follow at residues Tyr-31 to His-53, Phe-59 to His-81, and Phe-85 to His-107. Glycyl lysine isopeptide (Lys-Gly) (interchain with G-Cter in SUMO2) cross-links involve residues Lys-116, Lys-124, and Lys-149. 3 C2H2-type zinc fingers span residues His-164–His-186, Phe-192–His-214, and Phe-220–His-242. Lys-266 is covalently cross-linked (Glycyl lysine isopeptide (Lys-Gly) (interchain with G-Cter in SUMO2)). A C2H2-type 7; degenerate zinc finger spans residues Phe-298–Arg-322. C2H2-type zinc fingers lie at residues Cys-485–His-507, Phe-513–His-535, Tyr-640–His-662, and Phe-668–His-690. Residue Lys-698 forms a Glycyl lysine isopeptide (Lys-Gly) (interchain with G-Cter in SUMO2) linkage.

It belongs to the krueppel C2H2-type zinc-finger protein family.

The protein resides in the nucleus. Functionally, may be involved in transcriptional regulation. The polypeptide is Zinc finger protein 770 (Znf770) (Mus musculus (Mouse)).